The following is a 204-amino-acid chain: Holliday junction branch migration complex subunit RuvA (204 aa).

Residues 1–64 (MFAFLRGELV…EDLQQLFGFL (64 aa)) are domain I. Positions 65–143 (DEEELQLFRL…KIQPTSSAKA (79 aa)) are domain II. A flexible linker region spans residues 144–151 (GAPSAVLS). The segment at 151-204 (SATQLIDDAVAALTTLGFPKASAQKAVSKVLETTPGLSVEELVRTSLAAMHNNL) is domain III.

It belongs to the RuvA family. Homotetramer. Forms an RuvA(8)-RuvB(12)-Holliday junction (HJ) complex. HJ DNA is sandwiched between 2 RuvA tetramers; dsDNA enters through RuvA and exits via RuvB. An RuvB hexamer assembles on each DNA strand where it exits the tetramer. Each RuvB hexamer is contacted by two RuvA subunits (via domain III) on 2 adjacent RuvB subunits; this complex drives branch migration. In the full resolvosome a probable DNA-RuvA(4)-RuvB(12)-RuvC(2) complex forms which resolves the HJ.

It is found in the cytoplasm. In terms of biological role, the RuvA-RuvB-RuvC complex processes Holliday junction (HJ) DNA during genetic recombination and DNA repair, while the RuvA-RuvB complex plays an important role in the rescue of blocked DNA replication forks via replication fork reversal (RFR). RuvA specifically binds to HJ cruciform DNA, conferring on it an open structure. The RuvB hexamer acts as an ATP-dependent pump, pulling dsDNA into and through the RuvAB complex. HJ branch migration allows RuvC to scan DNA until it finds its consensus sequence, where it cleaves and resolves the cruciform DNA. This is Holliday junction branch migration complex subunit RuvA from Chlorobaculum parvum (strain DSM 263 / NCIMB 8327) (Chlorobium vibrioforme subsp. thiosulfatophilum).